We begin with the raw amino-acid sequence, 1048 residues long: Nonsense-mediated mRNA decay protein 5 (1048 aa).

One can recognise an Importin N-terminal domain in the interval 24–104; that stretch reads AETHLKNASK…KDMLIKTMVS (81 aa). Ser-977 is subject to Phosphoserine.

In terms of assembly, GTP-bound Ran dissociates the isolated NMD5/TFIIS complex.

It is found in the nucleus. Its subcellular location is the cytoplasm. Its function is as follows. Active in protein import into the nucleus. Its major import substrate is transcription elongation factor TFIIS. The protein is Nonsense-mediated mRNA decay protein 5 (NMD5) of Saccharomyces cerevisiae (strain ATCC 204508 / S288c) (Baker's yeast).